Here is a 252-residue protein sequence, read N- to C-terminus: Probable NADP-dependent dehydrogenase HI_1430 (252 aa).

NADP(+) is bound at residue 7 to 31; it reads LVTGATAGFGLAICKKLIEAGYKVI. Ser-137 provides a ligand contact to substrate. The active-site Proton acceptor is Tyr-150.

This sequence belongs to the short-chain dehydrogenases/reductases (SDR) family.

In Haemophilus influenzae (strain ATCC 51907 / DSM 11121 / KW20 / Rd), this protein is Probable NADP-dependent dehydrogenase HI_1430.